Here is a 257-residue protein sequence, read N- to C-terminus: LexA repressor (257 aa).

The H-T-H motif DNA-binding region spans 64 to 84 (FREIGEAAGLKSPSSVKHQLQ). Residues Ser-181 and Lys-218 each act as for autocatalytic cleavage activity in the active site.

The protein belongs to the peptidase S24 family. As to quaternary structure, homodimer.

It carries out the reaction Hydrolysis of Ala-|-Gly bond in repressor LexA.. Represses a number of genes involved in the response to DNA damage (SOS response), including recA and lexA. In the presence of single-stranded DNA, RecA interacts with LexA causing an autocatalytic cleavage which disrupts the DNA-binding part of LexA, leading to derepression of the SOS regulon and eventually DNA repair. This Bifidobacterium adolescentis (strain ATCC 15703 / DSM 20083 / NCTC 11814 / E194a) protein is LexA repressor.